A 192-amino-acid chain; its full sequence is dTTP/UTP pyrophosphatase (192 aa).

The Proton acceptor role is filled by aspartate 70.

The protein belongs to the Maf family. YhdE subfamily. It depends on a divalent metal cation as a cofactor.

The protein resides in the cytoplasm. The catalysed reaction is dTTP + H2O = dTMP + diphosphate + H(+). It carries out the reaction UTP + H2O = UMP + diphosphate + H(+). In terms of biological role, nucleoside triphosphate pyrophosphatase that hydrolyzes dTTP and UTP. May have a dual role in cell division arrest and in preventing the incorporation of modified nucleotides into cellular nucleic acids. The chain is dTTP/UTP pyrophosphatase from Clostridium perfringens (strain ATCC 13124 / DSM 756 / JCM 1290 / NCIMB 6125 / NCTC 8237 / Type A).